The sequence spans 93 residues: Acylphosphatase (93 aa).

An intrachain disulfide couples cysteine 5 to cysteine 49. The 89-residue stretch at 5-93 (CTIAWIYGRV…ETLTDFSIRY (89 aa)) folds into the Acylphosphatase-like domain. Residues arginine 20 and asparagine 38 contribute to the active site.

The protein belongs to the acylphosphatase family.

The enzyme catalyses an acyl phosphate + H2O = a carboxylate + phosphate + H(+). In Salmonella arizonae (strain ATCC BAA-731 / CDC346-86 / RSK2980), this protein is Acylphosphatase.